The primary structure comprises 172 residues: L-methionine sulfoximine/L-methionine sulfone acetyltransferase (172 aa).

The N-acetyltransferase domain maps to 3 to 166; it reads ASIRDAGVAD…DLTFMQLNLD (164 aa). Residues 75–77 and 85–87 each bind substrate; these read RPF and EHS. Acetyl-CoA is bound by residues 88–90, 96–101, and Asn127; these read VYV and GKGLGV.

In terms of assembly, homodimer.

It carries out the reaction L-methionine sulfoximine + acetyl-CoA = N-acetyl-L-methionine sulfoximine + CoA + H(+). The enzyme catalyses L-methionine sulfone + acetyl-CoA = N-acetyl-L-methionine sulfone + CoA + H(+). Plays a role in the resistance against the toxic effects of L-methionine sulfoximine (MSX), a rare amino acid, which inhibits glutamine synthetase (GlnA). Catalyzes the acetylation of L-methionine sulfoximine (MSX). The sequence is that of L-methionine sulfoximine/L-methionine sulfone acetyltransferase from Pseudomonas aeruginosa (strain ATCC 15692 / DSM 22644 / CIP 104116 / JCM 14847 / LMG 12228 / 1C / PRS 101 / PAO1).